Here is a 279-residue protein sequence, read N- to C-terminus: Lactose operon transcription activator (279 aa).

One can recognise an HTH araC/xylS-type domain in the interval 174-272 (QHAVDFINTN…EISASEYRHH (99 aa)). 2 consecutive DNA-binding regions (H-T-H motif) follow at residues 191–212 (EDVAKSVNITRSHLYKLFKKNL) and 239–262 (ISDISRQVGYKDPLLFSKNFTKHF).

Transcriptional regulator of the lacPH genes for lactose utilization. The chain is Lactose operon transcription activator (lacR) from Staphylococcus xylosus.